Reading from the N-terminus, the 533-residue chain is Putative adhesin domain-containing protein LiaX (533 aa).

Residues 1–277 (MKERERVLEL…EFNYPNPQAS (277 aa)) are binds the antibiotic daptomycin (DAP) and the antimicrobial peptide human LL-37, under physiologically relevant concentrations. Protects the OG1RF and S613 strains from LL-37-mediated killing in a concentration-dependent manner. Residues 63-89 (NALEKGESEGPTVDSFEENTQDSAEKD) form a disordered region. A coiled-coil region spans residues 83 to 186 (QDSAEKDREN…EEELKNIRKE (104 aa)). The interval 279–526 (IDVKVANGTV…INASTTTGSI (248 aa)) is putative adhesin region. The interval 289 to 526 (VFKTWDQEDV…INASTTTGSI (238 aa)) is involved in cell membrane remodeling.

Post-translationally, may undergo proteolytic cleavage, allowing release of the N-terminal region into the extracellular environment.

The protein localises to the secreted. It is found in the cell wall. The protein resides in the cell membrane. Its function is as follows. Involved in cell membrane remodeling, perhaps acting by negative modulation of the liaFSR and liaXYZ gene clusters, thereby regulating content and localization of anionic phospholipids. Binds to the antibiotic daptomycin (DAP) and to cationic antimicrobial peptides, such as human LL-37, perhaps functioning as a sensor that activates the cell envelope stress response. The chain is Putative adhesin domain-containing protein LiaX from Enterococcus faecalis (strain ATCC 700802 / V583).